A 380-amino-acid polypeptide reads, in one-letter code: Probable protein phosphatase 2C 27 (380 aa).

Positions 84 to 344 constitute a PPM-type phosphatase domain; the sequence is RSGSCAEQGA…DNLTVIVVCF (261 aa). Mn(2+)-binding residues include Asp128, Gly129, Asp292, and Asp335.

Belongs to the PP2C family. Mg(2+) serves as cofactor. Mn(2+) is required as a cofactor. In terms of tissue distribution, expressed in roots, leaves, stems, flower, and trichomes.

The protein resides in the nucleus. The protein localises to the cytoplasm. It carries out the reaction O-phospho-L-seryl-[protein] + H2O = L-seryl-[protein] + phosphate. The catalysed reaction is O-phospho-L-threonyl-[protein] + H2O = L-threonyl-[protein] + phosphate. Confers salt tolerance by triggering the expression of stress-responsive genes. This is Probable protein phosphatase 2C 27 from Arabidopsis thaliana (Mouse-ear cress).